A 541-amino-acid chain; its full sequence is Molybdate transporter 1 (541 aa).

Helical transmembrane passes span 24 to 44 (LLLS…PLLL), 58 to 78 (LLFS…PLPV), 98 to 118 (TVAA…TGGL), 137 to 157 (AGMS…GWLW), and 168 to 188 (GLGE…GLVV). Positions 193–213 (QQQQQQQSGEKPQERRKKRSK) are disordered. 2 helical membrane passes run 214–234 (MPVQ…FAVV) and 287–307 (MAIA…SALA). The segment at 317–366 (PQLYADDESSDSPLSPSPSASSSSLSSAPPQTPSAETPKPLSSPTSAEEG) is disordered. Residues 327 to 351 (DSPLSPSPSASSSSLSSAPPQTPSA) show a composition bias toward low complexity. 2 helical membrane passes run 413-433 (IILL…PGLL) and 435-455 (LLGK…GVEL). The tract at residues 510–541 (TEKGRGGEQGLLGEEEEEEEQGRVDEESPLLR) is disordered.

Belongs to the SLC26A/SulP transporter (TC 2.A.53) family.

It is found in the vacuole membrane. In terms of biological role, exports stored molybdate from the vacuole into the cytosol, making it available for molybdate cofactor (Moco) biosynthesis. Plays a role in molybdate homeostasis as high cytosolic levels of molybdate are toxic to cells. Not required for molybdate import into cells. This Neurospora crassa (strain ATCC 24698 / 74-OR23-1A / CBS 708.71 / DSM 1257 / FGSC 987) protein is Molybdate transporter 1.